Here is a 433-residue protein sequence, read N- to C-terminus: GTPase Obg (433 aa).

The region spanning 1–159 is the Obg domain; sequence MKFVDSADLI…FEIRAELKVL (159 aa). The OBG-type G domain occupies 160-332; that stretch reads ADVGFVGLPN…LLFMIYEELK (173 aa). GTP is bound by residues 166 to 173, 191 to 195, 213 to 216, 284 to 287, and 313 to 315; these read GLPNAGKS, FTTIN, DLPG, NKMD, and SGL. Residues S173 and T193 each contribute to the Mg(2+) site. In terms of domain architecture, OCT spans 355-433; that stretch reads KFEEQKEDIQ…VFDYELEWTD (79 aa).

This sequence belongs to the TRAFAC class OBG-HflX-like GTPase superfamily. OBG GTPase family. Monomer. It depends on Mg(2+) as a cofactor.

It localises to the cytoplasm. An essential GTPase which binds GTP, GDP and possibly (p)ppGpp with moderate affinity, with high nucleotide exchange rates and a fairly low GTP hydrolysis rate. Plays a role in control of the cell cycle, stress response, ribosome biogenesis and in those bacteria that undergo differentiation, in morphogenesis control. The protein is GTPase Obg of Mycoplasma capricolum subsp. capricolum (strain California kid / ATCC 27343 / NCTC 10154).